Here is a 92-residue protein sequence, read N- to C-terminus: MPRSLKKGPFVAYHLLKKIDKMNASGKKDVITTWSRTSTILPTMVGHTIAVYNGRQHVPIFISDQLVGHKLGEFVSTRTFKSHIKTDKKTKR.

It belongs to the universal ribosomal protein uS19 family.

The protein localises to the plastid. Its subcellular location is the chloroplast. Protein S19 forms a complex with S13 that binds strongly to the 16S ribosomal RNA. In Trieres chinensis (Marine centric diatom), this protein is Small ribosomal subunit protein uS19c (rps19).